A 206-amino-acid chain; its full sequence is Probable N-acetyltransferase 14 (206 aa).

One can recognise an N-acetyltransferase domain in the interval 55-206; sequence LRFVLASFAL…TLVREFSKEL (152 aa). Residues 57-77 traverse the membrane as a helical segment; the sequence is FVLASFALALLLPVFLAVAAM.

Belongs to the camello family.

Its subcellular location is the membrane. Functionally, probable acetyltransferase. Its function is as follows. May act as a transcription factor regulating the expression of coproporphyrinogen oxidase by binding to a promoter regulatory element. The polypeptide is Probable N-acetyltransferase 14 (Bos taurus (Bovine)).